The following is a 406-amino-acid chain: Putative gustatory receptor 59f (406 aa).

Residues 1–36 (MRSSATKGAKLKNSPRERLSSFNPQYAERYKELYRT) are Cytoplasmic-facing. Residues 37–57 (LFWLLLISVLANTAPITILPG) traverse the membrane as a helical segment. Topologically, residues 58–69 (CPNRFYRLVHLS) are extracellular. Residues 70-90 (WMILWYGLFVLGSYWEFVLVT) form a helical membrane-spanning segment. Topologically, residues 91 to 99 (TQRVSLDRY) are cytoplasmic. Residues 100 to 120 (LNAIESAIYVVHIFSIMLLTW) form a helical membrane-spanning segment. Residues 121–154 (QCRNWAPKLMTNIVTSDLNRAYTIDCNRTKRFIR) are Extracellular-facing. N147 carries an N-linked (GlcNAc...) asparagine glycan. Residues 155–175 (LQLFLVGIFACLAIFFNIWTH) traverse the membrane as a helical segment. Residues 176–189 (KFVVYRSILSINSY) are Cytoplasmic-facing. Residues 190 to 210 (VMPNIISSISFAQYYLLLQGI) form a helical membrane-spanning segment. Residues 211–259 (AWRQRRLTEGLERELTHLHSPRISEVQKIRMHHANLIDFTKAVNRTFQY) lie on the Extracellular side of the membrane. A glycan (N-linked (GlcNAc...) asparagine) is linked at N254. A helical transmembrane segment spans residues 260–280 (SILLLFVGCFLNFNLVLFLVY). At 281–364 (QGIENPSMAD…RQHVVCGVIN (84 aa)) the chain is on the cytoplasmic side. A helical transmembrane segment spans residues 365 to 385 (LDLKFLTTLLVASADFFIFLL). The Extracellular portion of the chain corresponds to 386-406 (QYDVTYEALSKSVQGNVTRYK). N-linked (GlcNAc...) asparagine glycosylation is present at N401.

This sequence belongs to the insect chemoreceptor superfamily. Gustatory receptor (GR) family. Gr10a subfamily. As to expression, expressed in the adult abdomen and wing. In larvae, is expressed in neurons of the terminal external chemosensory organ.

Its subcellular location is the cell membrane. Probable gustatory receptor which mediates acceptance or avoidance behavior, depending on its substrates. This Drosophila melanogaster (Fruit fly) protein is Putative gustatory receptor 59f (Gr59f).